The following is a 692-amino-acid chain: Polyphosphate kinase (692 aa).

Asn-57 is an ATP binding site. The Mg(2+) site is built by Arg-383 and Arg-413. His-443 serves as the catalytic Phosphohistidine intermediate. Residues Tyr-476, Arg-572, and His-600 each coordinate ATP.

This sequence belongs to the polyphosphate kinase 1 (PPK1) family. Mg(2+) is required as a cofactor. In terms of processing, an intermediate of this reaction is the autophosphorylated ppk in which a phosphate is covalently linked to a histidine residue through a N-P bond.

It catalyses the reaction [phosphate](n) + ATP = [phosphate](n+1) + ADP. Its function is as follows. Catalyzes the reversible transfer of the terminal phosphate of ATP to form a long-chain polyphosphate (polyP). The polypeptide is Polyphosphate kinase (Acinetobacter baumannii (strain AYE)).